The primary structure comprises 259 residues: Phosphate import ATP-binding protein PstB (259 aa).

The ABC transporter domain occupies 6 to 254 (SKNESVVFDV…PKDKRTEDYI (249 aa)). Residue 45–52 (GPSGCGKS) participates in ATP binding.

Belongs to the ABC transporter superfamily. Phosphate importer (TC 3.A.1.7) family. The complex is composed of two ATP-binding proteins (PstB), two transmembrane proteins (PstC and PstA) and a solute-binding protein (PstS).

The protein localises to the cell membrane. It catalyses the reaction phosphate(out) + ATP + H2O = ADP + 2 phosphate(in) + H(+). Functionally, part of the ABC transporter complex PstSACB involved in phosphate import. Responsible for energy coupling to the transport system. In Desulfitobacterium hafniense (strain Y51), this protein is Phosphate import ATP-binding protein PstB.